The chain runs to 230 residues: Heptaprenylglyceryl phosphate synthase (230 aa).

Residue Lys-12 participates in sn-glycerol 1-phosphate binding. Mg(2+) is bound by residues Asp-14 and Thr-40. Sn-glycerol 1-phosphate is bound by residues 159 to 164, Gly-189, and 209 to 210; these read YIEYSG and GD.

The protein belongs to the GGGP/HepGP synthase family. Group I subfamily. As to quaternary structure, homodimer. Requires Mg(2+) as cofactor.

It catalyses the reaction sn-glycerol 1-phosphate + all-trans-heptaprenyl diphosphate = 3-heptaprenyl-sn-glycero-1-phosphate + diphosphate. The protein operates within membrane lipid metabolism; glycerophospholipid metabolism. Its function is as follows. Prenyltransferase that catalyzes in vivo the transfer of the heptaprenyl moiety of heptaprenyl pyrophosphate (HepPP; 35 carbon atoms) to the C3 hydroxyl of sn-glycerol-1-phosphate (G1P), producing heptaprenylglyceryl phosphate (HepGP). This reaction is an ether-bond-formation step in the biosynthesis of archaea-type G1P-based membrane lipids found in Bacillales. In Staphylococcus aureus (strain bovine RF122 / ET3-1), this protein is Heptaprenylglyceryl phosphate synthase.